A 214-amino-acid chain; its full sequence is Protein DMP6 (214 aa).

A run of 4 helical transmembrane segments spans residues 52–72, 83–103, 143–163, and 178–198; these read LANLLPTGTVLAFQILSPICT, FMTALLVSICGFSCFILSFTD, FIDFVHAIMSFLVFGAVVLFD, and VVELLTTLPVAVGVFCSMVFA.

Belongs to the plant DMP1 protein family. In terms of tissue distribution, expressed constitutively in leaves, stems, flowers, siliques and roots (e.g. root hairs).

It localises to the vacuole membrane. Its function is as follows. Involved in membrane remodeling. In Arabidopsis thaliana (Mouse-ear cress), this protein is Protein DMP6.